The primary structure comprises 410 residues: Retrovirus-related Pol polyprotein from type-1 retrotransposable element R1 2 (410 aa).

The region spanning 1–118 (GCPQGSIGGP…SCFRYLGVNV (118 aa)) is the Reverse transcriptase domain. A nucleic acid-binding endonuclease region spans residues 254-410 (SSVIKLERLV…RLNLELDVNG (157 aa)).

It catalyses the reaction DNA(n) + a 2'-deoxyribonucleoside 5'-triphosphate = DNA(n+1) + diphosphate. The polypeptide is Retrovirus-related Pol polyprotein from type-1 retrotransposable element R1 2 (Nasonia vitripennis (Parasitic wasp)).